The sequence spans 573 residues: Pyrophosphate--fructose 6-phosphate 1-phosphotransferase (573 aa).

G90 contacts diphosphate. D184 is a binding site for Mg(2+). Residues 212–214, 251–252, 259–261, E320, and 434–437 contribute to the substrate site; these read TID, KY, MGR, and YEGR. Residue D214 is the Proton acceptor of the active site.

It belongs to the phosphofructokinase type A (PFKA) family. PPi-dependent PFK group II subfamily. Clade 'Long' sub-subfamily. As to quaternary structure, homodimer. It depends on Mg(2+) as a cofactor.

The protein localises to the cytoplasm. It carries out the reaction beta-D-fructose 6-phosphate + diphosphate = beta-D-fructose 1,6-bisphosphate + phosphate + H(+). It participates in carbohydrate degradation; glycolysis; D-glyceraldehyde 3-phosphate and glycerone phosphate from D-glucose: step 3/4. Non-allosteric. Functionally, catalyzes the phosphorylation of D-fructose 6-phosphate, the first committing step of glycolysis. Uses inorganic phosphate (PPi) as phosphoryl donor instead of ATP like common ATP-dependent phosphofructokinases (ATP-PFKs), which renders the reaction reversible, and can thus function both in glycolysis and gluconeogenesis. Consistently, PPi-PFK can replace the enzymes of both the forward (ATP-PFK) and reverse (fructose-bisphosphatase (FBPase)) reactions. In Treponema pallidum (strain Nichols), this protein is Pyrophosphate--fructose 6-phosphate 1-phosphotransferase.